Here is a 506-residue protein sequence, read N- to C-terminus: Ecdysteroid UDP-glucosyltransferase (506 aa).

The N-terminal stretch at methionine 1–serine 18 is a signal peptide.

This sequence belongs to the UDP-glycosyltransferase family.

Functionally, catalyzes the transfer of glucose from UDP-glucose to ecdysteroids which are insect molting hormones. Expression of egt interferes with normal insect development and block molting. This chain is Ecdysteroid UDP-glucosyltransferase (EGT), found in Lymantria dispar multicapsid nuclear polyhedrosis virus (LdMNPV).